The following is a 280-amino-acid chain: Manganese import system permease protein ScaB (280 aa).

The next 8 helical transmembrane spans lie at 18–38 (ALIT…FIIL), 61–81 (ILGI…SILI), 94–114 (TAIG…IGVA), 139–159 (TIGV…PLLL), 174–194 (VKIY…TAMQ), 196–216 (VGTI…YLYA), 222–242 (MMLL…FIGY), and 246–266 (IAVG…SFFI).

This sequence belongs to the ABC-3 integral membrane protein family.

Its subcellular location is the cell membrane. In terms of biological role, part of an ABC transporter complex involved in manganese import. This is Manganese import system permease protein ScaB from Streptococcus parasanguinis.